We begin with the raw amino-acid sequence, 82 residues long: Small ribosomal subunit protein uS17 (82 aa).

The protein belongs to the universal ribosomal protein uS17 family. Part of the 30S ribosomal subunit.

One of the primary rRNA binding proteins, it binds specifically to the 5'-end of 16S ribosomal RNA. This Synechococcus elongatus (strain ATCC 33912 / PCC 7942 / FACHB-805) (Anacystis nidulans R2) protein is Small ribosomal subunit protein uS17.